We begin with the raw amino-acid sequence, 180 residues long: Putative 5'(3')-deoxyribonucleotidase (180 aa).

D9 (nucleophile) is an active-site residue. The Mg(2+) site is built by D9, D11, and D135. D11 acts as the Proton donor in catalysis.

Belongs to the 5'(3')-deoxyribonucleotidase family. Mg(2+) is required as a cofactor.

In terms of biological role, dephosphorylates the 5' and 2'(3')-phosphates of deoxyribonucleotides. The sequence is that of Putative 5'(3')-deoxyribonucleotidase from Staphylococcus aureus (strain Mu50 / ATCC 700699).